The sequence spans 371 residues: Alanine dehydrogenase (371 aa).

Substrate contacts are provided by R15 and K75. Catalysis depends on H96, which acts as the Proton donor/acceptor. NAD(+) contacts are provided by residues S134, D198, R203, S220, 239 to 240 (VL), 267 to 270 (VAID), K279, and 298 to 301 (VANM). Residue D270 is the Proton donor/acceptor of the active site.

Belongs to the AlaDH/PNT family. It depends on Mg(2+) as a cofactor.

The enzyme catalyses L-alanine + NAD(+) + H2O = pyruvate + NH4(+) + NADH + H(+). The protein operates within amino-acid degradation; L-alanine degradation via dehydrogenase pathway; NH(3) and pyruvate from L-alanine: step 1/1. In terms of biological role, catalyzes the reversible reductive amination of pyruvate to L-alanine. The protein is Alanine dehydrogenase of Halomonas elongata (strain ATCC 33173 / DSM 2581 / NBRC 15536 / NCIMB 2198 / 1H9).